The sequence spans 135 residues: Galectin-1 (135 aa).

Position 2 is an N-acetylalanine (alanine 2). Residues 4 to 135 (GLVASNLNLK…DFKIKCVAFE (132 aa)) enclose the Galectin domain. An N6-acetyllysine mark is found at lysine 13, lysine 19, and lysine 29. A Phosphoserine modification is found at serine 30. A beta-D-galactoside-binding positions include 45-49 (HFNPR), histidine 53, asparagine 62, and 69-72 (WGTE). Lysine 108 is modified (N6-acetyllysine; alternate). Lysine 108 is modified (N6-succinyllysine; alternate). Lysine 128 carries the N6-acetyllysine modification.

In terms of assembly, binds LGALS3BP. Interacts with CD2, CD3, CD4, CD6, CD7, CD43, ALCAM and CD45. Interacts with laminin. Interacts with SUSD2. Exists in a reversible and active monomer-homodimer equilibrium, the mononomer/dimer state is regulated by lectin concentration. Interacts with cargo receptor TMED10; the interaction mediates the translocation from the cytoplasm into the ERGIC (endoplasmic reticulum-Golgi intermediate compartment) and thereby secretion.

It localises to the cytoplasm. The protein localises to the secreted. The protein resides in the extracellular space. Its subcellular location is the extracellular matrix. Its function is as follows. Lectin that binds beta-galactoside and a wide array of complex carbohydrates. Plays a role in regulating apoptosis, cell proliferation and cell differentiation. Inhibits CD45 protein phosphatase activity and therefore the dephosphorylation of Lyn kinase. Strong inducer of T-cell apoptosis. This chain is Galectin-1 (LGALS1), found in Cricetulus griseus (Chinese hamster).